A 137-amino-acid chain; its full sequence is uncharacterized protein (137 aa).

3 helical membrane passes run 5 to 25, 79 to 99, and 109 to 129; these read ELLWPALITALATMLYLVLVI, IAAILGAVWLLGRILYAWGYY, and FALGSLSSMILVVGALLSILW.

This sequence belongs to the MAPEG family.

The protein resides in the cell membrane. This is an uncharacterized protein from Synechocystis sp. (strain ATCC 27184 / PCC 6803 / Kazusa).